The sequence spans 65 residues: Prokaryotic ubiquitin-like protein Pup (65 aa).

A compositionally biased stretch (basic and acidic residues) spans 1 to 13 (MAQEQKQPRKSSE). The disordered stretch occupies residues 1 to 34 (MAQEQKQPRKSSEADEAVEAVAETDVSERKEALD). Positions 21–59 (VAETDVSERKEALDSDVDDILDEIDDVLETNAEDFVKSF) are ARC ATPase binding. Residues 25 to 49 (DVSERKEALDSDVDDILDEIDDVLE) adopt a coiled-coil conformation. An Isoglutamyl lysine isopeptide (Glu-Lys) (interchain with K-? in acceptor proteins) cross-link involves residue E65.

Belongs to the prokaryotic ubiquitin-like protein family. In terms of assembly, strongly interacts with the proteasome-associated ATPase ARC through a hydrophobic interface; the interacting region of Pup lies in its C-terminal half. There is one Pup binding site per ARC hexamer ring.

It functions in the pathway protein degradation; proteasomal Pup-dependent pathway. Functionally, protein modifier that is covalently attached to lysine residues of substrate proteins, thereby targeting them for proteasomal degradation. The tagging system is termed pupylation. The protein is Prokaryotic ubiquitin-like protein Pup of Nocardioides sp. (strain ATCC BAA-499 / JS614).